A 341-amino-acid polypeptide reads, in one-letter code: L-threonine 3-dehydrogenase (341 aa).

Cysteine 38 is a Zn(2+) binding site. Catalysis depends on charge relay system residues threonine 40 and histidine 43. Residues histidine 63, glutamate 64, cysteine 93, cysteine 96, cysteine 99, and cysteine 107 each coordinate Zn(2+). Residues isoleucine 175, aspartate 195, arginine 200, 262 to 264, and 286 to 287 contribute to the NAD(+) site; these read LGI and IY.

Belongs to the zinc-containing alcohol dehydrogenase family. In terms of assembly, homotetramer. Zn(2+) is required as a cofactor.

The protein localises to the cytoplasm. The enzyme catalyses L-threonine + NAD(+) = (2S)-2-amino-3-oxobutanoate + NADH + H(+). It participates in amino-acid degradation; L-threonine degradation via oxydo-reductase pathway; glycine from L-threonine: step 1/2. Catalyzes the NAD(+)-dependent oxidation of L-threonine to 2-amino-3-ketobutyrate. The sequence is that of L-threonine 3-dehydrogenase from Shewanella oneidensis (strain ATCC 700550 / JCM 31522 / CIP 106686 / LMG 19005 / NCIMB 14063 / MR-1).